Reading from the N-terminus, the 85-residue chain is MAHKKGQGSTQNNRDSAGRRLGVKRFGSQFVRAGNIIVRQRGTKVHPGDNVGLGKDHTIYALIDGVVKFQQKDKNRKKVSVIPAS.

Residues 1 to 23 form a disordered region; the sequence is MAHKKGQGSTQNNRDSAGRRLGV.

Belongs to the bacterial ribosomal protein bL27 family.

This is Large ribosomal subunit protein bL27 from Helicobacter hepaticus (strain ATCC 51449 / 3B1).